Reading from the N-terminus, the 157-residue chain is MNLNATLIAQLVVFFILAWFTMKFVWPPIVKALDERAKKIADGLAAADKAKADLALAEKKVVEELRKARESAGDVRASAEKQASQLVDEARAEASRIIAQAREAAEAEAGAAAQRAKEALRDQVAHLAVAGAEKILRREINAQVHAELLANLKQELQ.

The chain crosses the membrane as a helical span at residues leucine 7 to proline 27.

The protein belongs to the ATPase B chain family. F-type ATPases have 2 components, F(1) - the catalytic core - and F(0) - the membrane proton channel. F(1) has five subunits: alpha(3), beta(3), gamma(1), delta(1), epsilon(1). F(0) has three main subunits: a(1), b(2) and c(10-14). The alpha and beta chains form an alternating ring which encloses part of the gamma chain. F(1) is attached to F(0) by a central stalk formed by the gamma and epsilon chains, while a peripheral stalk is formed by the delta and b chains.

Its subcellular location is the cell inner membrane. F(1)F(0) ATP synthase produces ATP from ADP in the presence of a proton or sodium gradient. F-type ATPases consist of two structural domains, F(1) containing the extramembraneous catalytic core and F(0) containing the membrane proton channel, linked together by a central stalk and a peripheral stalk. During catalysis, ATP synthesis in the catalytic domain of F(1) is coupled via a rotary mechanism of the central stalk subunits to proton translocation. Its function is as follows. Component of the F(0) channel, it forms part of the peripheral stalk, linking F(1) to F(0). The protein is ATP synthase subunit b of Azoarcus sp. (strain BH72).